The chain runs to 326 residues: Probable cell division protein WhiA (326 aa).

Residues 275 to 308 (SLEELGQLSDPPLTKDAVAGRIRRLLAMADKKAS) constitute a DNA-binding region (H-T-H motif).

The protein belongs to the WhiA family.

Involved in cell division and chromosome segregation. The protein is Probable cell division protein WhiA of Beutenbergia cavernae (strain ATCC BAA-8 / DSM 12333 / CCUG 43141 / JCM 11478 / NBRC 16432 / NCIMB 13614 / HKI 0122).